The chain runs to 115 residues: Putative membrane protein insertion efficiency factor (115 aa).

The protein belongs to the UPF0161 family.

Its subcellular location is the cell membrane. Could be involved in insertion of integral membrane proteins into the membrane. The sequence is that of Putative membrane protein insertion efficiency factor from Mycolicibacterium paratuberculosis (strain ATCC BAA-968 / K-10) (Mycobacterium paratuberculosis).